The following is a 253-amino-acid chain: Triosephosphate isomerase (253 aa).

9–11 serves as a coordination point for substrate; it reads NWK. The active-site Electrophile is histidine 96. Residue glutamate 169 is the Proton acceptor of the active site. Residues glycine 175, serine 215, and 236-237 contribute to the substrate site; that span reads GG.

It belongs to the triosephosphate isomerase family. Homodimer.

The protein localises to the cytoplasm. It carries out the reaction D-glyceraldehyde 3-phosphate = dihydroxyacetone phosphate. Its pathway is carbohydrate biosynthesis; gluconeogenesis. The protein operates within carbohydrate degradation; glycolysis; D-glyceraldehyde 3-phosphate from glycerone phosphate: step 1/1. Its function is as follows. Involved in the gluconeogenesis. Catalyzes stereospecifically the conversion of dihydroxyacetone phosphate (DHAP) to D-glyceraldehyde-3-phosphate (G3P). The sequence is that of Triosephosphate isomerase from Borreliella burgdorferi (strain ZS7) (Borrelia burgdorferi).